Reading from the N-terminus, the 251-residue chain is Hydroxyacylglutathione hydrolase (251 aa).

Residues H53, H55, D57, H58, H110, D127, and H165 each contribute to the Zn(2+) site.

It belongs to the metallo-beta-lactamase superfamily. Glyoxalase II family. As to quaternary structure, monomer. Zn(2+) is required as a cofactor.

The enzyme catalyses an S-(2-hydroxyacyl)glutathione + H2O = a 2-hydroxy carboxylate + glutathione + H(+). The protein operates within secondary metabolite metabolism; methylglyoxal degradation; (R)-lactate from methylglyoxal: step 2/2. In terms of biological role, thiolesterase that catalyzes the hydrolysis of S-D-lactoyl-glutathione to form glutathione and D-lactic acid. In Escherichia coli O6:H1 (strain CFT073 / ATCC 700928 / UPEC), this protein is Hydroxyacylglutathione hydrolase.